Here is a 385-residue protein sequence, read N- to C-terminus: 8-amino-7-oxononanoate synthase (385 aa).

R23 is a substrate binding site. Position 110 to 111 (110 to 111 (GF)) interacts with pyridoxal 5'-phosphate. H135 is a binding site for substrate. The pyridoxal 5'-phosphate site is built by S180, H208, and T234. An N6-(pyridoxal phosphate)lysine modification is found at K237. T350 contributes to the substrate binding site.

This sequence belongs to the class-II pyridoxal-phosphate-dependent aminotransferase family. BioF subfamily. In terms of assembly, homodimer. Pyridoxal 5'-phosphate is required as a cofactor.

It carries out the reaction 6-carboxyhexanoyl-[ACP] + L-alanine + H(+) = (8S)-8-amino-7-oxononanoate + holo-[ACP] + CO2. It functions in the pathway cofactor biosynthesis; biotin biosynthesis. Its function is as follows. Catalyzes the decarboxylative condensation of pimeloyl-[acyl-carrier protein] and L-alanine to produce 8-amino-7-oxononanoate (AON), [acyl-carrier protein], and carbon dioxide. The sequence is that of 8-amino-7-oxononanoate synthase from Vibrio vulnificus (strain YJ016).